Here is a 333-residue protein sequence, read N- to C-terminus: MRNSCKKARRTRPLKATIQALLVAIATMTFFFTSDIALPQSAAAYPFWAQQTYPETPREPTGRIVCANCHLAAKPAEVEVPQSVLPDTVFKAVVKIPYDTKLQQVAADGSKVGLNVGAVLMLPEGFKIAPEERIPEELKKEVGDVYFQPYKEGQDNVLLVGPLPGEQYQEIVFPVLSPNPTTDKNIHFGKYAIHLGANRGRGQIYPTGEKSNNNVFTASATGTITKIAKEEDEYGNVKYQVSIQTDSGKTVVDTIPAGPELIVSEGQAVKAGEALTNNPNVGGFGQDDTEIVLQDPNRVKWMIAFICLVMLAQLMLILKKKQVEKVQAAEMNF.

A signal peptide spans 1-37; the sequence is MRNSCKKARRTRPLKATIQALLVAIATMTFFFTSDIA. Residues 38 to 298 are Cytoplasmic-facing; that stretch reads LPQSAAAYPF…TEIVLQDPNR (261 aa). Y45, C66, C69, and H70 together coordinate heme. The chain crosses the membrane as a helical span at residues 299–319; that stretch reads VKWMIAFICLVMLAQLMLILK. The Lumenal, thylakoid portion of the chain corresponds to 320–333; the sequence is KKQVEKVQAAEMNF.

The protein belongs to the cytochrome f family. The 4 large subunits of the cytochrome b6-f complex are cytochrome b6, subunit IV (17 kDa polypeptide, PetD), cytochrome f and the Rieske protein, while the 4 small subunits are PetG, PetL, PetM and PetN. The complex functions as a dimer. It depends on heme as a cofactor.

The protein resides in the cellular thylakoid membrane. In terms of biological role, component of the cytochrome b6-f complex, which mediates electron transfer between photosystem II (PSII) and photosystem I (PSI), cyclic electron flow around PSI, and state transitions. This is Cytochrome f (petA) from Mastigocladus laminosus (Fischerella sp.).